A 472-amino-acid chain; its full sequence is CAAX prenyl protease 1 homolog (472 aa).

The Lumenal portion of the chain corresponds to 1–8; the sequence is MDVGGALD. The helical transmembrane segment at 9–29 threads the bilayer; sequence LYGCSVNVYNAILIFIWVLFL. Residues 30–75 lie on the Cytoplasmic side of the membrane; it reads WETYINLRQLKVAKRVTESPEEIKCLMNDVDFDKSRRYAIDKMNFD. A helical membrane pass occupies residues 76 to 96; it reads IVSGFYNILSLSAVLYFQLIA. Residues 97 to 124 lie on the Lumenal side of the membrane; that stretch reads WAWHKSQEHMLFVCSYAPRSFGTTEGSE. The helical transmembrane segment at 125 to 145 threads the bilayer; the sequence is ILFSLLFTVYVALFQFFESLP. At 146–175 the chain is on the cytoplasmic side; the sequence is WSYYRHFVIEERYGFNKQTIGFFIKDRLKS. A helical transmembrane segment spans residues 176-196; sequence LAVGLVIGLPIISMLVWIIKA. At 197 to 207 the chain is on the lumenal side; sequence GGHYFYIYAYG. A helical membrane pass occupies residues 208–228; it reads FTFVVSFIIMFIYPEFIAPIF. At 229–340 the chain is on the cytoplasmic side; it reads DRYEHFPDCE…LGHWKLKHMT (112 aa). Histidine 329 lines the Zn(2+) pocket. Residue glutamate 330 is part of the active site. Histidine 333 provides a ligand contact to Zn(2+). Residues 341-361 traverse the membrane as a helical segment; sequence FNLIIAQINIFFMFFAFGQLI. Topologically, residues 362 to 382 are lumenal; sequence NVDQLFVDFGFPPSTAPILIR. The helical transmembrane segment at 383–403 threads the bilayer; that stretch reads LIVVFQFIFMPYSSVLEFLMT. The Cytoplasmic portion of the chain corresponds to 404–472; it reads MLSRKFEFQA…AIDAKMGKEK (69 aa). Glutamate 410 contacts Zn(2+). Catalysis depends on aspartate 414, which acts as the Proton donor.

This sequence belongs to the peptidase M48A family. Homodimer; disulfide-linked. Zn(2+) serves as cofactor.

Its subcellular location is the endoplasmic reticulum membrane. It carries out the reaction Hydrolyzes the peptide bond -P2-(S-farnesyl or geranylgeranyl)C-P1'-P2'-P3'-COOH where P1' and P2' are amino acids with aliphatic side chains and P3' is any C-terminal residue.. Inhibited by ethylenediaminetetraacetic acid (EDTA) but not by serine, aspartic or cysteine protease inhibitors. Inhibited by high concentration of Zn(2+) (&gt; 0.1 mM). Functionally, zinc-dependent metalloproteinase. Proteolytically removes the C-terminal three residues of farnesylated proteins. The sequence is that of CAAX prenyl protease 1 homolog from Taenia solium (Pork tapeworm).